A 463-amino-acid polypeptide reads, in one-letter code: Glycine--tRNA ligase (463 aa).

Residues Arg-98 and Glu-174 each contribute to the substrate site. ATP contacts are provided by residues 206 to 208 (RNE), 216 to 221 (FRTREF), 290 to 291 (EL), and 334 to 337 (GADR). Position 221 to 225 (221 to 225 (FEQME)) interacts with substrate. Residue 330-334 (EPSLG) coordinates substrate.

It belongs to the class-II aminoacyl-tRNA synthetase family. As to quaternary structure, homodimer.

The protein localises to the cytoplasm. The enzyme catalyses tRNA(Gly) + glycine + ATP = glycyl-tRNA(Gly) + AMP + diphosphate. Its function is as follows. Catalyzes the attachment of glycine to tRNA(Gly). The protein is Glycine--tRNA ligase of Staphylococcus saprophyticus subsp. saprophyticus (strain ATCC 15305 / DSM 20229 / NCIMB 8711 / NCTC 7292 / S-41).